The primary structure comprises 238 residues: uncharacterized protein (238 aa).

Residues 1-68 enclose the HTH gntR-type domain; the sequence is MIYKSIAERL…HGSGTYLVRK (68 aa). Positions 28-47 form a DNA-binding region, H-T-H motif; that stretch reads EKKLAEEFAVSRMTIRKAID.

This is an uncharacterized protein from Escherichia coli (strain K12).